Consider the following 287-residue polypeptide: Putative B3 domain-containing protein Os08g0157700 (287 aa).

Acidic residues predominate over residues 17–29 (ATEEEEEEEEEEQ). Residues 17–36 (ATEEEEEEEEEEQALGQEPA) form a disordered region. Residues 71–168 (FDKVVTPSDV…RYFIDYRHCH (98 aa)) constitute a DNA-binding region (TF-B3).

The protein resides in the nucleus. The sequence is that of Putative B3 domain-containing protein Os08g0157700 from Oryza sativa subsp. japonica (Rice).